A 134-amino-acid chain; its full sequence is Cytochrome b5 isoform E (134 aa).

A Cytochrome b5 heme-binding domain is found at 5 to 81 (RKVLSFEEVS…MDKYFIGEID (77 aa)). Residues His-40 and His-64 each coordinate heme. Residues 107–127 (FIIKILQFLVPILILGLALVV) form a helical membrane-spanning segment. Positions 128-134 (RHYTKKD) match the AKR2A-binding sequence (ABS) required for endoplasmic reticulum membrane targeting motif.

Belongs to the cytochrome b5 family. Interacts with CER1, BI-1, FAH1 and FAH2. Interacts with AKR2A. In terms of tissue distribution, expressed in roots, stems, leaves, flowers and siliques.

It localises to the cell membrane. It is found in the endoplasmic reticulum membrane. In terms of biological role, membrane bound hemoprotein which function as an electron carrier for several membrane bound oxygenases, including fatty acid desaturases. This chain is Cytochrome b5 isoform E (CYTB5-E), found in Arabidopsis thaliana (Mouse-ear cress).